We begin with the raw amino-acid sequence, 64 residues long: Movement protein TGBp3 (64 aa).

Residues 1–4 (MRSV) lie on the Lumenal side of the membrane. Residues 5–27 (ALTLCAIIAGYLLVSNLQNVFSP) form a helical membrane-spanning segment. At 28–64 (EVCTLVITGESIRINGCNLSPAHFRAISHLKVLQIHL) the chain is on the cytoplasmic side.

The protein belongs to the Tymovirales TGBp3 protein family.

Its subcellular location is the host endoplasmic reticulum membrane. Plays a role in viral cell-to-cell propagation, by facilitating genome transport to neighboring plant cells through plasmosdesmata. May induce the formation of granular vesicles derived from the Endoplasmic reticulum, which align on actin filaments. This Lily symptomless virus (LSV) protein is Movement protein TGBp3.